A 439-amino-acid polypeptide reads, in one-letter code: Amino-acid acetyltransferase (439 aa).

One can recognise an N-acetyltransferase domain in the interval 289-429 (EDIRIATVQD…DHYNYQRRSK (141 aa)).

The protein belongs to the acetyltransferase family. ArgA subfamily.

The protein resides in the cytoplasm. The catalysed reaction is L-glutamate + acetyl-CoA = N-acetyl-L-glutamate + CoA + H(+). It functions in the pathway amino-acid biosynthesis; L-arginine biosynthesis; N(2)-acetyl-L-ornithine from L-glutamate: step 1/4. This chain is Amino-acid acetyltransferase, found in Mannheimia succiniciproducens (strain KCTC 0769BP / MBEL55E).